The primary structure comprises 156 residues: ATP synthase subunit b (156 aa).

A helical membrane pass occupies residues 11 to 31 (LIAFALFVWFCMKFVWPPIIN).

Belongs to the ATPase B chain family. F-type ATPases have 2 components, F(1) - the catalytic core - and F(0) - the membrane proton channel. F(1) has five subunits: alpha(3), beta(3), gamma(1), delta(1), epsilon(1). F(0) has three main subunits: a(1), b(2) and c(10-14). The alpha and beta chains form an alternating ring which encloses part of the gamma chain. F(1) is attached to F(0) by a central stalk formed by the gamma and epsilon chains, while a peripheral stalk is formed by the delta and b chains.

The protein localises to the cell inner membrane. Its function is as follows. F(1)F(0) ATP synthase produces ATP from ADP in the presence of a proton or sodium gradient. F-type ATPases consist of two structural domains, F(1) containing the extramembraneous catalytic core and F(0) containing the membrane proton channel, linked together by a central stalk and a peripheral stalk. During catalysis, ATP synthesis in the catalytic domain of F(1) is coupled via a rotary mechanism of the central stalk subunits to proton translocation. Component of the F(0) channel, it forms part of the peripheral stalk, linking F(1) to F(0). The chain is ATP synthase subunit b from Haemophilus influenzae (strain PittGG).